Here is a 357-residue protein sequence, read N- to C-terminus: Chorismate synthase (357 aa).

Residues R48 and R54 each contribute to the NADP(+) site. FMN contacts are provided by residues 125-127 (RSS), 243-244 (NA), G283, 298-302 (KPTSS), and R324.

This sequence belongs to the chorismate synthase family. As to quaternary structure, homotetramer. FMNH2 serves as cofactor.

The enzyme catalyses 5-O-(1-carboxyvinyl)-3-phosphoshikimate = chorismate + phosphate. The protein operates within metabolic intermediate biosynthesis; chorismate biosynthesis; chorismate from D-erythrose 4-phosphate and phosphoenolpyruvate: step 7/7. Functionally, catalyzes the anti-1,4-elimination of the C-3 phosphate and the C-6 proR hydrogen from 5-enolpyruvylshikimate-3-phosphate (EPSP) to yield chorismate, which is the branch point compound that serves as the starting substrate for the three terminal pathways of aromatic amino acid biosynthesis. This reaction introduces a second double bond into the aromatic ring system. This Pasteurella multocida (strain Pm70) protein is Chorismate synthase.